The primary structure comprises 230 residues: 7-cyano-7-deazaguanine synthase (230 aa).

8 to 18 (LSGGMDSAVVT) serves as a coordination point for ATP. 4 residues coordinate Zn(2+): Cys-186, Cys-196, Cys-199, and Cys-202.

This sequence belongs to the QueC family. It depends on Zn(2+) as a cofactor.

It carries out the reaction 7-carboxy-7-deazaguanine + NH4(+) + ATP = 7-cyano-7-deazaguanine + ADP + phosphate + H2O + H(+). It participates in purine metabolism; 7-cyano-7-deazaguanine biosynthesis. Functionally, catalyzes the ATP-dependent conversion of 7-carboxy-7-deazaguanine (CDG) to 7-cyano-7-deazaguanine (preQ(0)). The protein is 7-cyano-7-deazaguanine synthase of Xylella fastidiosa (strain M12).